The chain runs to 573 residues: Arginine--tRNA ligase (573 aa).

Positions 122-132 (PNLAKEMHVGH) match the 'HIGH' region motif.

This sequence belongs to the class-I aminoacyl-tRNA synthetase family. In terms of assembly, monomer.

It localises to the cytoplasm. It carries out the reaction tRNA(Arg) + L-arginine + ATP = L-arginyl-tRNA(Arg) + AMP + diphosphate. The sequence is that of Arginine--tRNA ligase from Laribacter hongkongensis (strain HLHK9).